The primary structure comprises 61 residues: U-poneritoxin(01)-Om5a (61 aa).

Residues M1–A23 form the signal peptide. The propeptide occupies D24 to A41. Q59 carries the glutamine amide modification.

It belongs to the formicidae venom precursor-01 superfamily. Truncated sequences of this peptide have also been found in the venom. It is possible they have been cleaved in the venom. As to expression, expressed by the venom gland.

Its subcellular location is the secreted. Its function is as follows. Acidic peptide with potent hemolytic activities (94.8% at 50 uM). It also shows low antimicrobial activities against E.coli (MIC=50uM), as well as histamine-releasing activity (28.3% at 10 uM). Does not have activity against S.aureus, and S.cerevisiae. In Odontomachus monticola (Trap-jaw ant), this protein is U-poneritoxin(01)-Om5a.